The sequence spans 121 residues: Small ribosomal subunit protein uS13 (121 aa).

Residues 97 to 121 (VRGQRTRTNARTRRGARKTVAGRKK) are disordered. Residues 100–121 (QRTRTNARTRRGARKTVAGRKK) are compositionally biased toward basic residues.

This sequence belongs to the universal ribosomal protein uS13 family. In terms of assembly, part of the 30S ribosomal subunit. Forms a loose heterodimer with protein S19. Forms two bridges to the 50S subunit in the 70S ribosome.

In terms of biological role, located at the top of the head of the 30S subunit, it contacts several helices of the 16S rRNA. In the 70S ribosome it contacts the 23S rRNA (bridge B1a) and protein L5 of the 50S subunit (bridge B1b), connecting the 2 subunits; these bridges are implicated in subunit movement. Contacts the tRNAs in the A and P-sites. This is Small ribosomal subunit protein uS13 from Prochlorococcus marinus (strain NATL2A).